A 146-amino-acid polypeptide reads, in one-letter code: Acidic phospholipase A2 S8-51 (146 aa).

The signal sequence occupies residues 1–19 (MYPAHLLVLLAVCVSLLGA). Residues 20–27 (ASIPPQPL) constitute a propeptide that is removed on maturation. Cystine bridges form between C38–C98, C54–C145, C56–C72, C71–C126, C78–C119, C87–C112, and C105–C117. Residues Y55, G57, and G59 each coordinate Ca(2+). H75 is a catalytic residue. D76 is a binding site for Ca(2+). Residue D120 is part of the active site.

The protein belongs to the phospholipase A2 family. Group I subfamily. D49 sub-subfamily. Requires Ca(2+) as cofactor. In terms of tissue distribution, expressed by the venom gland.

Its subcellular location is the secreted. It carries out the reaction a 1,2-diacyl-sn-glycero-3-phosphocholine + H2O = a 1-acyl-sn-glycero-3-phosphocholine + a fatty acid + H(+). Functionally, snake venom phospholipase A2 (PLA2) that inhibits collagen-induced platelet aggregation. PLA2 catalyzes the calcium-dependent hydrolysis of the 2-acyl groups in 3-sn-phosphoglycerides. This Austrelaps superbus (Lowland copperhead snake) protein is Acidic phospholipase A2 S8-51.